The primary structure comprises 187 residues: Probable nicotinate-nucleotide adenylyltransferase (187 aa).

Belongs to the NadD family.

It carries out the reaction nicotinate beta-D-ribonucleotide + ATP + H(+) = deamido-NAD(+) + diphosphate. It functions in the pathway cofactor biosynthesis; NAD(+) biosynthesis; deamido-NAD(+) from nicotinate D-ribonucleotide: step 1/1. Functionally, catalyzes the reversible adenylation of nicotinate mononucleotide (NaMN) to nicotinic acid adenine dinucleotide (NaAD). The polypeptide is Probable nicotinate-nucleotide adenylyltransferase (Anaeromyxobacter dehalogenans (strain 2CP-C)).